We begin with the raw amino-acid sequence, 310 residues long: Tagatose-6-phosphate kinase (310 aa).

It belongs to the carbohydrate kinase PfkB family. LacC subfamily.

It catalyses the reaction D-tagatofuranose 6-phosphate + ATP = D-tagatofuranose 1,6-bisphosphate + ADP + H(+). It functions in the pathway carbohydrate metabolism; D-tagatose 6-phosphate degradation; D-glyceraldehyde 3-phosphate and glycerone phosphate from D-tagatose 6-phosphate: step 1/2. The chain is Tagatose-6-phosphate kinase from Staphylococcus aureus (strain bovine RF122 / ET3-1).